The following is a 138-amino-acid chain: Ig heavy chain V region TEPC 1017 (138 aa).

Residues 1–20 (MGWSYIILFLVATATDVHSQ) form the signal peptide. Residues 21 to 49 (VQLQQPGAELVKPGASVQLSCKASGHTFT) form a framework-1 region. A disulfide bond links C41 and C115. The segment at 50–54 (NYWIH) is complementarity-determining-1. A framework-2 region spans residues 55-68 (WVKQRPGQGLEWIG). The interval 69-85 (EINPNDGRSNYNEKFKN) is complementarity-determining-2. The segment at 86–117 (KATLTVDKSSSTAYMQLSSLTPEEFAVYYCAR) is framework-3. The interval 118–127 (SDGYYDWFVY) is complementarity-determining-3. The interval 128–138 (WGQGTLVTFSA) is framework-4.

The sequence is that of Ig heavy chain V region TEPC 1017 from Mus musculus (Mouse).